Consider the following 193-residue polypeptide: Orotate phosphoribosyltransferase (193 aa).

117-125 (EDVVTTGLS) lines the 5-phospho-alpha-D-ribose 1-diphosphate pocket. Residues Thr-121 and Arg-149 each contribute to the orotate site.

The protein belongs to the purine/pyrimidine phosphoribosyltransferase family. PyrE subfamily. Homodimer. The cofactor is Mg(2+).

The catalysed reaction is orotidine 5'-phosphate + diphosphate = orotate + 5-phospho-alpha-D-ribose 1-diphosphate. It participates in pyrimidine metabolism; UMP biosynthesis via de novo pathway; UMP from orotate: step 1/2. Functionally, catalyzes the transfer of a ribosyl phosphate group from 5-phosphoribose 1-diphosphate to orotate, leading to the formation of orotidine monophosphate (OMP). In Erythrobacter litoralis (strain HTCC2594), this protein is Orotate phosphoribosyltransferase.